Reading from the N-terminus, the 734-residue chain is Photosystem I P700 chlorophyll a apoprotein A2 (734 aa).

The next 8 helical transmembrane spans lie at 46 to 69, 135 to 158, 175 to 199, 273 to 291, 330 to 353, 369 to 395, 417 to 439, and 517 to 535; these read IFAS…FHVA, LYAG…LHLQ, LNHH…HVAI, IAHH…GHMY, LHFQ…QHLY, AALY…IFFV, AIIS…LYVH, and FLVH…LILV. The [4Fe-4S] cluster site is built by cysteine 559 and cysteine 568. The next 2 membrane-spanning stretches (helical) occupy residues 575-596 and 643-665; these read AFYL…YWHW and LSVW…MFLI. Positions 654, 662, and 670 each coordinate chlorophyll a. Residue tryptophan 671 coordinates phylloquinone. The helical transmembrane segment at 707-727 threads the bilayer; that stretch reads LVGLVHFSVGYVLTYAAFVIA.

Belongs to the PsaA/PsaB family. The PsaA/B heterodimer binds the P700 chlorophyll special pair and subsequent electron acceptors. PSI consists of a core antenna complex that captures photons, and an electron transfer chain that converts photonic excitation into a charge separation. The eukaryotic PSI reaction center is composed of at least 11 subunits. The cofactor is P700 is a chlorophyll a/chlorophyll a' dimer, A0 is one or more chlorophyll a, A1 is one or both phylloquinones and FX is a shared 4Fe-4S iron-sulfur center..

The protein localises to the plastid. It localises to the chloroplast thylakoid membrane. It catalyses the reaction reduced [plastocyanin] + hnu + oxidized [2Fe-2S]-[ferredoxin] = oxidized [plastocyanin] + reduced [2Fe-2S]-[ferredoxin]. In terms of biological role, psaA and PsaB bind P700, the primary electron donor of photosystem I (PSI), as well as the electron acceptors A0, A1 and FX. PSI is a plastocyanin/cytochrome c6-ferredoxin oxidoreductase, converting photonic excitation into a charge separation, which transfers an electron from the donor P700 chlorophyll pair to the spectroscopically characterized acceptors A0, A1, FX, FA and FB in turn. Oxidized P700 is reduced on the lumenal side of the thylakoid membrane by plastocyanin or cytochrome c6. This is Photosystem I P700 chlorophyll a apoprotein A2 from Cyanidium caldarium (Red alga).